The chain runs to 86 residues: Small ribosomal subunit protein bS18 (86 aa).

This sequence belongs to the bacterial ribosomal protein bS18 family. In terms of assembly, part of the 30S ribosomal subunit. Forms a tight heterodimer with protein bS6.

Its function is as follows. Binds as a heterodimer with protein bS6 to the central domain of the 16S rRNA, where it helps stabilize the platform of the 30S subunit. This is Small ribosomal subunit protein bS18 from Campylobacter lari (strain RM2100 / D67 / ATCC BAA-1060).